Reading from the N-terminus, the 508-residue chain is Photosystem II CP47 reaction center protein (508 aa).

Helical transmembrane passes span 21 to 36, 101 to 115, 140 to 156, 203 to 218, 237 to 252, and 457 to 472; these read SVHI…WAGS, IVFS…IWHW, GIHL…FGVF, IAAG…FHLS, VLSS…AFVV, and SFAL…HGAR.

This sequence belongs to the PsbB/PsbC family. PsbB subfamily. In terms of assembly, PSII is composed of 1 copy each of membrane proteins PsbA, PsbB, PsbC, PsbD, PsbE, PsbF, PsbH, PsbI, PsbJ, PsbK, PsbL, PsbM, PsbT, PsbX, PsbY, PsbZ, Psb30/Ycf12, at least 3 peripheral proteins of the oxygen-evolving complex and a large number of cofactors. It forms dimeric complexes. It depends on Binds multiple chlorophylls. PSII binds additional chlorophylls, carotenoids and specific lipids. as a cofactor.

It is found in the plastid. The protein resides in the chloroplast thylakoid membrane. One of the components of the core complex of photosystem II (PSII). It binds chlorophyll and helps catalyze the primary light-induced photochemical processes of PSII. PSII is a light-driven water:plastoquinone oxidoreductase, using light energy to abstract electrons from H(2)O, generating O(2) and a proton gradient subsequently used for ATP formation. The sequence is that of Photosystem II CP47 reaction center protein from Jasminum nudiflorum (Winter jasmine).